Here is a 149-residue protein sequence, read N- to C-terminus: Large ribosomal subunit protein uL15 (149 aa).

Positions 1-11 are enriched in basic and acidic residues; the sequence is MSDPIKLHDLR. The disordered stretch occupies residues 1–44; that stretch reads MSDPIKLHDLRPAPGAKKAKTRVGRGEASKGKTAGRGTKGTKAR.

This sequence belongs to the universal ribosomal protein uL15 family. As to quaternary structure, part of the 50S ribosomal subunit.

In terms of biological role, binds to the 23S rRNA. The sequence is that of Large ribosomal subunit protein uL15 from Corynebacterium jeikeium (strain K411).